A 648-amino-acid chain; its full sequence is Magnetosome protein MamZ (648 aa).

The interval 1 to 431 is major facilitator domain; it reads MLEAWMPKSG…YAAWLLANGI (431 aa). The next 18 membrane-spanning stretches (helical) occupy residues 28–49, 69–87, 94–113, 119–143, 163–182, 188–207, 252–273, 285–305, 317–335, 341–361, 373–395, 407–428, 449–468, 488–506, 518–538, 558–574, 595–612, and 618–634; these read IIYLLMTVGSLVAALSISIQPL, IQVVAEIVSIVCVGWFGLL, VRIIATGFLIAVAGAAMSLL, LAFGAAGLVLFYLTRVLLTVGADTV, LMGNLVFMMVFGGTMLSAII, YKGGVFIIMCLPLLIGIAGF, FYTRADVIILSLFFSLWCISVS, AHAAVMIGLLGLAVLAAIPLW, AIGASLSLAAVGYIWLGMF, WLVALPLLMVGIGHAGCFVTL, ILGAMVGAGYLVGGLGTVMLVQS, APFILMGTGKMLVTLYAAWLLA, PLVFLTAALPFVWLIGRSVI, YLGDWAFTFLIISLSMRPV, YRRMIGLFAFFYAVLHVLAYV, FILLGLAAFLLLIPLAF, ATYVINALVALHFILAAN, and PYVYAAAVIVLLWYRFY. Positions 444–645 are ferric reductase-like domain, required for correct magnetite crystal formation; the sequence is KVDWKPLVFL…WRGGNVLRAL (202 aa).

The protein in the N-terminal section; belongs to the major facilitator superfamily. As to quaternary structure, probably interacts with FtsZ-like and MamY proteins.

It is found in the magnetosome membrane. Its function is as follows. Required for correct biomineralization of the magnetosome; probably converts and then transports some form of iron. It is partially functionally redundant with MamH. May function with MamX, MamY amd Mms6 in biomineralization. Despite its strong similarity to MsrQ (AC V6EX82) this protein does not genetically interact with bona fide MsrP (AC V6F0A4), which is encoded elsewhere in the genome. In Magnetospirillum gryphiswaldense (strain DSM 6361 / JCM 21280 / NBRC 15271 / MSR-1), this protein is Magnetosome protein MamZ.